Reading from the N-terminus, the 113-residue chain is U11-theraphotoxin-Hhn1t (113 aa).

Positions 1 to 21 (MNTVRVTFLLVFVLAVSLGQA) are cleaved as a signal peptide. Positions 22-74 (DKDENRMEMQEKTEQGKSYLDFAENLLLQKLEELEAKLLEEDSEESRNSRQKR) are excised as a propeptide. Over residues 60 to 69 (LEEDSEESRN) the composition is skewed to basic and acidic residues. Residues 60-83 (LEEDSEESRNSRQKRCIGEGVPCD) are disordered. 3 disulfides stabilise this stretch: C75-C90, C82-C95, and C89-C110.

Belongs to the neurotoxin 14 (magi-1) family. 01 (HNTX-16) subfamily. As to expression, expressed by the venom gland.

The protein resides in the secreted. Its function is as follows. Probable ion channel inhibitor. The chain is U11-theraphotoxin-Hhn1t from Cyriopagopus hainanus (Chinese bird spider).